We begin with the raw amino-acid sequence, 745 residues long: 1,4-alpha-glucan branching enzyme GlgB (745 aa).

Residue Asp-416 is the Nucleophile of the active site. Glu-469 serves as the catalytic Proton donor.

Belongs to the glycosyl hydrolase 13 family. GlgB subfamily. Monomer.

It carries out the reaction Transfers a segment of a (1-&gt;4)-alpha-D-glucan chain to a primary hydroxy group in a similar glucan chain.. It participates in glycan biosynthesis; glycogen biosynthesis. Its function is as follows. Catalyzes the formation of the alpha-1,6-glucosidic linkages in glycogen by scission of a 1,4-alpha-linked oligosaccharide from growing alpha-1,4-glucan chains and the subsequent attachment of the oligosaccharide to the alpha-1,6 position. The protein is 1,4-alpha-glucan branching enzyme GlgB of Shewanella sp. (strain W3-18-1).